Here is a 410-residue protein sequence, read N- to C-terminus: Acyl-CoA-binding domain-containing protein 5-B (410 aa).

The ACB domain occupies 12–101 (AQKRFEAAVK…IQLIIETLPV (90 aa)). An acyl-CoA-binding positions include 23–32 (IRSLPEDGSY), 43–47 (YSYYK), Lys69, and Tyr88. Residues 119 to 128 (VEDDDDDDDE) show a composition bias toward acidic residues. Disordered regions lie at residues 119–165 (VEDD…LDDY), 221–242 (SDDE…GSGV), and 254–320 (GANM…DRMD). Residues 326–355 (TQITTILSELEDNMQDVLRRLTTLEQLTAS) are a coiled coil. Over 382–404 (SPFTAVLTVLWPFAVHWLVQFYL) the chain traverses the membrane.

The protein localises to the membrane. Its function is as follows. Binds medium- and long-chain acyl-CoA esters. This Danio rerio (Zebrafish) protein is Acyl-CoA-binding domain-containing protein 5-B (acbd5b).